The primary structure comprises 239 residues: Probable intron-encoded endonuclease I-ZbiI (239 aa).

Belongs to the LAGLIDADG endonuclease family.

It localises to the mitochondrion. Endonuclease involved in mitochondrial 21S rRNA gene intron homing. The protein is Probable intron-encoded endonuclease I-ZbiI of Zygosaccharomyces bisporus.